A 318-amino-acid chain; its full sequence is MDIKKLPKEIIEGRRLKREEDLRFFATANLEELCQGADNIRKVLCGDAVNLCSIINGKSGKCSENCKFCAQSSHHHTGIEEYSFLDTNLIVEDCKKHANKGVHRYSIVTAGRELKGKDLQVACDAYKRMKEECDIDLCASHGLLSEEAFIALKESGVSMYHENIETSKRNFPNICTTHTYKDKINAIKLAQRLGFKVCSGGIIGMGETFEDRLDMAVSLAELKIQSIPINTLMPIKGTTYEDLEPLTEDEILRTVAMFRFINPTANIRLAAGRSLMEDSGRRAFHAGANATITGDLLTTSGNNIDKDKEMLTQMGFHL.

The region spanning 44–270 (LCGDAVNLCS…INPTANIRLA (227 aa)) is the Radical SAM core domain. Residues cysteine 62, cysteine 66, and cysteine 69 each contribute to the [4Fe-4S] cluster site. Positions 106, 138, 198, and 268 each coordinate [2Fe-2S] cluster.

This sequence belongs to the radical SAM superfamily. Biotin synthase family. In terms of assembly, homodimer. The cofactor is [4Fe-4S] cluster. [2Fe-2S] cluster is required as a cofactor.

The catalysed reaction is (4R,5S)-dethiobiotin + (sulfur carrier)-SH + 2 reduced [2Fe-2S]-[ferredoxin] + 2 S-adenosyl-L-methionine = (sulfur carrier)-H + biotin + 2 5'-deoxyadenosine + 2 L-methionine + 2 oxidized [2Fe-2S]-[ferredoxin]. It participates in cofactor biosynthesis; biotin biosynthesis; biotin from 7,8-diaminononanoate: step 2/2. Its function is as follows. Catalyzes the conversion of dethiobiotin (DTB) to biotin by the insertion of a sulfur atom into dethiobiotin via a radical-based mechanism. In Alkaliphilus metalliredigens (strain QYMF), this protein is Biotin synthase.